The sequence spans 609 residues: Proteasome-associated ATPase (609 aa).

Residues 1–24 (MADSERSEAFGTPDDTPLSSNDAA) are disordered. The stretch at 19 to 96 (SSNDAAELEQ…LREEVDRLGQ (78 aa)) forms a coiled coil. 296 to 301 (GCGKTL) is an ATP binding site. Residues 608-609 (YL) are docks into pockets in the proteasome alpha-ring.

The protein belongs to the AAA ATPase family. In terms of assembly, homohexamer. Assembles into a hexameric ring structure that caps the 20S proteasome core. Strongly interacts with the prokaryotic ubiquitin-like protein Pup through a hydrophobic interface; the interacting region of ARC lies in its N-terminal coiled-coil domain. There is one Pup binding site per ARC hexamer ring. Upon ATP-binding, the C-terminus of ARC interacts with the alpha-rings of the proteasome core, possibly by binding to the intersubunit pockets.

It functions in the pathway protein degradation; proteasomal Pup-dependent pathway. In terms of biological role, ATPase which is responsible for recognizing, binding, unfolding and translocation of pupylated proteins into the bacterial 20S proteasome core particle. May be essential for opening the gate of the 20S proteasome via an interaction with its C-terminus, thereby allowing substrate entry and access to the site of proteolysis. Thus, the C-termini of the proteasomal ATPase may function like a 'key in a lock' to induce gate opening and therefore regulate proteolysis. The polypeptide is Proteasome-associated ATPase (Mycobacterium ulcerans (strain Agy99)).